Consider the following 346-residue polypeptide: NADH-ubiquinone oxidoreductase chain 2 (346 aa).

11 consecutive transmembrane segments (helical) span residues 1-21, 25-45, 60-80, 96-116, 124-144, 149-169, 178-198, 200-220, 242-262, 274-294, and 325-345; these read MNPHAKLISLISLLLGTTITI, HWIMAWTGLEINTLAIIPLIS, FLVQAAASALVLFSSMSNAWA, MLLTAAIAIKLGLVPFHFWFP, LTTALLLSTLMKLPPMAILLM, LNPTVLTSMALASAALGGWMG, ILAFSSIAHLGWMTMIIIYNP, LTLLTFYLYILMTATVFLSLN, AALMLTLLSLAGLPPLTGFMP, EMTTVATIIALLSLLGLFFYL, and IAILSSLSAILLPISPMILAA.

This sequence belongs to the complex I subunit 2 family.

The protein resides in the mitochondrion inner membrane. The catalysed reaction is a ubiquinone + NADH + 5 H(+)(in) = a ubiquinol + NAD(+) + 4 H(+)(out). Its function is as follows. Core subunit of the mitochondrial membrane respiratory chain NADH dehydrogenase (Complex I) that is believed to belong to the minimal assembly required for catalysis. Complex I functions in the transfer of electrons from NADH to the respiratory chain. The immediate electron acceptor for the enzyme is believed to be ubiquinone. This chain is NADH-ubiquinone oxidoreductase chain 2 (MT-ND2), found in Struthio camelus (Common ostrich).